A 574-amino-acid chain; its full sequence is GRB2-associated-binding protein 4 (574 aa).

Positions 1–33 (MSLPSPSPSRELCPPDPAFAPLSSWPGSGPAGG) are disordered. The 114-residue stretch at 39 to 152 (HVLYSGWLRK…WVQSICQICG (114 aa)) folds into the PH domain. Disordered stretches follow at residues 176–200 (PAEP…PVSH), 215–234 (LRSH…ASFS), 293–331 (SLAS…RPAE), and 418–513 (PPVN…PRST). The segment covering 181 to 193 (CSHQHLPQEQEPT) has biased composition (polar residues). Polar residues-rich tracts occupy residues 302 to 318 (GSLT…SGKY) and 424 to 442 (LKPN…NNRV). A compositionally biased stretch (low complexity) spans 457–478 (SGTSHTFDSSSSQHPISTQSIT). Residues 502–513 (GGTSSSAPPRST) are compositionally biased toward polar residues.

The protein belongs to the GAB family.

The polypeptide is GRB2-associated-binding protein 4 (GAB4) (Homo sapiens (Human)).